The primary structure comprises 1370 residues: Reverse gyrase 1 (1370 aa).

The RG N-terminal-type zinc-finger motif lies at 6-47; sequence AASRGVYRYLCPNCGGPNSEERLSRGLPCPRCLPRLPRKGVS. Residues Cys-16, Cys-19, Cys-34, and Cys-37 each contribute to the Zn(2+) site. ATP is bound by residues Gln-95 and 112–119; that span reads APTGVGKT. The Helicase ATP-binding domain maps to 99–287; it reads AKRLARGDSF…RKKLLEVKRR (189 aa). The DEAD box motif lies at 220–223; sequence DDVD. The topoisomerase I stretch occupies residues 643–1370; the sequence is ELVRTALLVV…VSRVWGAGVG (728 aa). The Toprim domain occupies 647 to 825; it reads TALLVVESPN…DIKRLEFHEV (179 aa). Glu-653 is a binding site for Mg(2+). Residues 744 to 772 form an RG C-terminal-type zinc finger; sequence IKRCLDCGYQFVDEASRCPRCGSELIRNS. Residues Cys-747, Cys-750, Cys-761, and Cys-764 each coordinate Zn(2+). Asp-794 is a binding site for Mg(2+). The Topo IA-type catalytic domain occupies 841-1323; sequence DDNLVDAQVV…SVFNEISDLA (483 aa). The active-site O-(5'-phospho-DNA)-tyrosine intermediate is the Tyr-1028.

It in the N-terminal section; belongs to the DEAD box helicase family. DDVD subfamily. This sequence in the C-terminal section; belongs to the type IA topoisomerase family. As to quaternary structure, monomer. Zn(2+) serves as cofactor. It depends on Mg(2+) as a cofactor.

It localises to the cytoplasm. It carries out the reaction ATP + H2O = ADP + phosphate + H(+). Its function is as follows. Modifies the topological state of DNA by introducing positive supercoils in an ATP-dependent process, increasing the linking number in steps of +1. Binds to single-stranded DNA, transiently cleaves and then rejoins the ends, introducing a positive supercoil in the process. The scissile phosphodiester is attacked by the catalytic tyrosine of the enzyme, resulting in the formation of a DNA-(5'-phosphotyrosyl)-enzyme intermediate. Probably involved in rewinding DNA strands in regions of the chromosome that have opened up to allow replication, transcription, DNA repair and/or for DNA protection. The chain is Reverse gyrase 1 from Aeropyrum pernix (strain ATCC 700893 / DSM 11879 / JCM 9820 / NBRC 100138 / K1).